The sequence spans 465 residues: MKSVIFTEEKNLQRQNPLQKSEQQRRNFEMPSPPTTTSLSVTQTINGSHSFTIKGYSLAKGIGIGKHIASDTFTVGGYQWAIYFYPDGKNPEDNSAYVSVFIALASDGTDVRALFELSLLDQSGKGKHKVHSHFDRALESGPYTLKYRGSMWGYKRFFRRLMLETSDFLKDDCLKINCTVGVVVSEIDCPRLHSIHVPASDIGSHFGMLLENEDGSDITFNVSGEKFRAHRLVLAARSPVFESEFLDVTGEEDRDIEVTDMEPKVFKALLHYIYKDALIEDAESSSSSGSSVGPSASDTLAAKLLGAADKYKLPRLSLMCESVLCKDISVDSVANILALADRYNASALKSVCLKFAAENLIAVMRSDGFDYLREHCPSLQSELLKTVAGCEEELSGGGGKTRSVWGQFSDGGAETNGRQAQTWGDINGGAERSQSVWVEVVNANGSGRNNNDNNNSDDPMAELED.

The segment at 12-40 is disordered; the sequence is LQRQNPLQKSEQQRRNFEMPSPPTTTSLS. In terms of domain architecture, MATH spans 46 to 180; sequence NGSHSFTIKG…DDCLKINCTV (135 aa). The BTB domain maps to 216 to 282; sequence SDITFNVSGE…IYKDALIEDA (67 aa). 2 disordered regions span residues 395-429 and 441-465; these read SGGG…INGG and VNAN…ELED. Residues 442–458 are compositionally biased toward low complexity; that stretch reads NANGSGRNNNDNNNSDD.

This sequence belongs to the Tdpoz family. Interacts with RAP2-4. Binds to MYB56 at the promoter of FLOWERING LOCUS T (FT). As to expression, ubiquitous.

The protein localises to the cytoplasm. It functions in the pathway protein modification; protein ubiquitination. In terms of biological role, may act as a substrate-specific adapter of an E3 ubiquitin-protein ligase complex (CUL3-RBX1-BTB) which mediates the ubiquitination and subsequent proteasomal degradation of target proteins. This is BTB/POZ and MATH domain-containing protein 4 (BPM4) from Arabidopsis thaliana (Mouse-ear cress).